The primary structure comprises 452 residues: UDP-N-acetylmuramoylalanine--D-glutamate ligase (452 aa).

115 to 121 (GTNGKTT) is an ATP binding site.

The protein belongs to the MurCDEF family.

Its subcellular location is the cytoplasm. It catalyses the reaction UDP-N-acetyl-alpha-D-muramoyl-L-alanine + D-glutamate + ATP = UDP-N-acetyl-alpha-D-muramoyl-L-alanyl-D-glutamate + ADP + phosphate + H(+). Its pathway is cell wall biogenesis; peptidoglycan biosynthesis. Functionally, cell wall formation. Catalyzes the addition of glutamate to the nucleotide precursor UDP-N-acetylmuramoyl-L-alanine (UMA). In Geobacter metallireducens (strain ATCC 53774 / DSM 7210 / GS-15), this protein is UDP-N-acetylmuramoylalanine--D-glutamate ligase.